Reading from the N-terminus, the 183-residue chain is Segregation and condensation protein B (183 aa).

Belongs to the ScpB family. As to quaternary structure, homodimer. Homodimerization may be required to stabilize the binding of ScpA to the Smc head domains. Component of a cohesin-like complex composed of ScpA, ScpB and the Smc homodimer, in which ScpA and ScpB bind to the head domain of Smc. The presence of the three proteins is required for the association of the complex with DNA.

It localises to the cytoplasm. Participates in chromosomal partition during cell division. May act via the formation of a condensin-like complex containing Smc and ScpA that pull DNA away from mid-cell into both cell halves. The chain is Segregation and condensation protein B from Streptococcus pyogenes serotype M12 (strain MGAS2096).